Consider the following 644-residue polypeptide: Arginine--tRNA ligase (644 aa).

The 'HIGH' region motif lies at 129–139 (ANPIHPLHLGH).

It belongs to the class-I aminoacyl-tRNA synthetase family.

The protein localises to the cytoplasm. The enzyme catalyses tRNA(Arg) + L-arginine + ATP = L-arginyl-tRNA(Arg) + AMP + diphosphate. This Aeropyrum pernix (strain ATCC 700893 / DSM 11879 / JCM 9820 / NBRC 100138 / K1) protein is Arginine--tRNA ligase (argS).